Consider the following 140-residue polypeptide: ATP synthase epsilon chain (140 aa).

The protein belongs to the ATPase epsilon chain family. As to quaternary structure, F-type ATPases have 2 components, CF(1) - the catalytic core - and CF(0) - the membrane proton channel. CF(1) has five subunits: alpha(3), beta(3), gamma(1), delta(1), epsilon(1). CF(0) has three main subunits: a, b and c.

The protein resides in the cell inner membrane. Produces ATP from ADP in the presence of a proton gradient across the membrane. The protein is ATP synthase epsilon chain of Nitrosomonas europaea (strain ATCC 19718 / CIP 103999 / KCTC 2705 / NBRC 14298).